A 307-amino-acid polypeptide reads, in one-letter code: MERVHLFFHREQLKRKGTAKGLFVTDRSVSPILLTQRDRAEKASYEISWEKSLLGERTLFLNAEQDDPSLMRRRLAYCFFDQIGVPAPVASYSFLTINGQPEGIYLNIKNHQPAGKRSYGVKTADPRVPLSLFNNDSSAFLHEFFILIRTAGDDELAERIKLYLDVKLFFLWLIGNTCTNQGFYYTFCLNESGRLYVSPMETRSLAVQEWYEEDPLLTKGKTLSSRLLSIPAFRSQYHTLMKNVLKRSFTIERLSPLINEWHLDICQSAADDPFIKKSPFQIEKEQTNILREIEERQDFLQAHLARL.

This sequence belongs to the CotH family.

It localises to the spore coat. Involved in the assembly of several proteins in the inner and outer layer of the spore coat. The protein is Inner spore coat protein H-like protein (yisJ) of Bacillus subtilis (strain 168).